Reading from the N-terminus, the 110-residue chain is Protein RnfH (110 aa).

The interval 90–110 (VDKTRREGSIEGRKWLPKDSR) is disordered.

The protein belongs to the UPF0125 (RnfH) family.

The polypeptide is Protein RnfH (Burkholderia mallei (strain NCTC 10229)).